An 85-amino-acid chain; its full sequence is Small ribosomal subunit protein uS17 (85 aa).

Belongs to the universal ribosomal protein uS17 family. In terms of assembly, part of the 30S ribosomal subunit.

Functionally, one of the primary rRNA binding proteins, it binds specifically to the 5'-end of 16S ribosomal RNA. The sequence is that of Small ribosomal subunit protein uS17 from Acetivibrio thermocellus (strain ATCC 27405 / DSM 1237 / JCM 9322 / NBRC 103400 / NCIMB 10682 / NRRL B-4536 / VPI 7372) (Clostridium thermocellum).